Reading from the N-terminus, the 475-residue chain is Cytochrome P450 monooxygenase opdE (475 aa).

The helical transmembrane segment at 10–32 threads the bilayer; that stretch reads VQNIPVLLLSCGFLAILFRSLVL. C457 lines the heme pocket.

This sequence belongs to the cytochrome P450 family. The cofactor is heme.

The protein resides in the membrane. It participates in secondary metabolite biosynthesis. Its function is as follows. Cytochrome P450 monooxygenase; part of the gene cluster that mediates the biosynthesis of oxopyrrolidines, polyketide-amino acid hybrid compounds with feature structures of tetramic acid. Does not seem to play a role in oxopyrrolidines A and B biosynthesis. May be involved in further modifications of these oxopyrrolidines. This is Cytochrome P450 monooxygenase opdE from Penicillium oxalicum (strain 114-2 / CGMCC 5302) (Penicillium decumbens).